Here is a 753-residue protein sequence, read N- to C-terminus: 5-methyltetrahydropteroyltriglutamate--homocysteine methyltransferase (753 aa).

5-methyltetrahydropteroyltri-L-glutamate-binding positions include 17–20 and Lys117; that span reads RELK. Residues 431–433 and Glu484 contribute to the L-homocysteine site; that span reads IGS. Residues 431 to 433 and Glu484 each bind L-methionine; that span reads IGS. Residues 515–516 and Trp561 each bind 5-methyltetrahydropteroyltri-L-glutamate; that span reads RC. L-homocysteine is bound at residue Asp599. Asp599 contributes to the L-methionine binding site. Glu605 is a 5-methyltetrahydropteroyltri-L-glutamate binding site. Zn(2+) is bound by residues His641, Cys643, and Glu665. Residue His694 is the Proton donor of the active site. Zn(2+) is bound at residue Cys726.

The protein belongs to the vitamin-B12 independent methionine synthase family. Zn(2+) is required as a cofactor.

It carries out the reaction 5-methyltetrahydropteroyltri-L-glutamate + L-homocysteine = tetrahydropteroyltri-L-glutamate + L-methionine. The protein operates within amino-acid biosynthesis; L-methionine biosynthesis via de novo pathway; L-methionine from L-homocysteine (MetE route): step 1/1. In terms of biological role, catalyzes the transfer of a methyl group from 5-methyltetrahydrofolate to homocysteine resulting in methionine formation. The protein is 5-methyltetrahydropteroyltriglutamate--homocysteine methyltransferase of Klebsiella pneumoniae (strain 342).